The chain runs to 546 residues: Serine/threonine-protein kinase Chk2 (546 aa).

Residues 1 to 70 (MKSHHQSHSS…SSHSSSGTLS (70 aa)) form a disordered region. Residues 8 to 70 (HSSTSSKAHD…SSHSSSGTLS (63 aa)) show a composition bias toward low complexity. A Phosphothreonine; by MAP3K20 modification is found at Thr68. At Ser71 the chain carries Phosphoserine; by PLK3. Thr77 is modified (phosphothreonine; by ATM and MAP3K20). Ser82 is subject to Phosphoserine; by PLK3. In terms of domain architecture, FHA spans 117 to 179 (YWFGRDKSCE…NGTFVNTELI (63 aa)). A Protein kinase domain is found at 224 to 490 (YIMSKTLGSG…TEEALNHPWL (267 aa)). Residues 231 to 238 (GSGACGEV), Lys253, and 306 to 312 (ELMEGGE) each bind ATP. The active-site Proton acceptor is the Asp351. Residues 355–356 (EN) and Asp372 each bind ATP. A T-loop/activation segment region spans residues 372–398 (DFGQSKILGETSLMRTLCGTPTYLAPE). The residue at position 383 (Ser383) is a Phosphoserine; by autocatalysis. A phosphothreonine; by autocatalysis mark is found at Thr387 and Thr391. Ser460 is subject to Phosphoserine.

Belongs to the protein kinase superfamily. CAMK Ser/Thr protein kinase family. CHK2 subfamily. In terms of assembly, homodimer. Homodimerization is part of the activation process but the dimer may dissociate following activation. Interacts with PML. Interacts with TP53. Interacts with RB1; phosphorylates RB1. Interacts with BRCA1. Interacts (phosphorylated at Thr-68) with MDC1; requires ATM-mediated phosphorylation of CHEK2. Interacts with TP53BP1; modulates CHEK2 phosphorylation at Thr-68 in response to ionizing radiation. Interacts with CDC25A; phosphorylates CDC25A and mediates its degradation in response to ionizing radiation. Interacts with CUL1; mediates CHEK2 ubiquitination and regulation. Interacts with CDKN2AIP. Interacts (via protein kinase domain) with CCAR2 (via N-terminus). Interacts with SIRT1. The cofactor is Mg(2+). Phosphorylated. Phosphorylated at Ser-82 by PLK3 in response to DNA damage, promoting phosphorylation at Thr-77 by ATM and the G2/M transition checkpoint. Phosphorylation at Thr-77 induces homodimerization. Autophosphorylates at Thr-387 and Thr-391 in the T-loop/activation segment upon dimerization to become fully active. DNA damage-induced autophosphorylation at Ser-383 induces CUL1-mediated ubiquitination and regulates the pro-apoptotic function. Phosphorylation at Ser-460 also regulates ubiquitination. Phosphorylated by PLK4. Post-translationally, ubiquitinated. CUL1-mediated ubiquitination regulates the pro-apoptotic function. Ubiquitination may also regulate protein stability. Ubiquitinated by RNF8 via 'Lys-48'-linked ubiquitination. Ubiquitously expressed with higher levels in the thymus, spleen and colon (at protein level).

The protein localises to the nucleus. Its subcellular location is the PML body. The protein resides in the nucleoplasm. The catalysed reaction is L-seryl-[protein] + ATP = O-phospho-L-seryl-[protein] + ADP + H(+). The enzyme catalyses L-threonyl-[protein] + ATP = O-phospho-L-threonyl-[protein] + ADP + H(+). Its activity is regulated as follows. Activated through phosphorylation at Thr-68 by ATM in response to DNA double-strand breaks. Activation is modulated by several mediators including MDC1 and TP53BP1. Induces homodimerization with exchange of the T-loop/activation segment between protomers and transphosphorylation of the protomers. The autophosphorylated kinase dimer is fully active. Negatively regulated by PPM1D through dephosphorylation of Thr-68. Functionally, serine/threonine-protein kinase which is required for checkpoint-mediated cell cycle arrest, activation of DNA repair and apoptosis in response to the presence of DNA double-strand breaks. May also negatively regulate cell cycle progression during unperturbed cell cycles. Following activation, phosphorylates numerous effectors preferentially at the consensus sequence [L-X-R-X-X-S/T]. Regulates cell cycle checkpoint arrest through phosphorylation of CDC25A, CDC25B and CDC25C, inhibiting their activity. Inhibition of CDC25 phosphatase activity leads to increased inhibitory tyrosine phosphorylation of CDK-cyclin complexes and blocks cell cycle progression. May also phosphorylate NEK6 which is involved in G2/M cell cycle arrest. Regulates DNA repair through phosphorylation of BRCA2, enhancing the association of RAD51 with chromatin which promotes DNA repair by homologous recombination. Also stimulates the transcription of genes involved in DNA repair (including BRCA2) through the phosphorylation and activation of the transcription factor FOXM1. Regulates apoptosis through the phosphorylation of p53/TP53, MDM4 and PML. Phosphorylation of p53/TP53 at 'Ser-20' by CHEK2 may alleviate inhibition by MDM2, leading to accumulation of active p53/TP53. Phosphorylation of MDM4 may also reduce degradation of p53/TP53. Also controls the transcription of pro-apoptotic genes through phosphorylation of the transcription factor E2F1. Tumor suppressor, it may also have a DNA damage-independent function in mitotic spindle assembly by phosphorylating BRCA1. Its absence may be a cause of the chromosomal instability observed in some cancer cells. Promotes the CCAR2-SIRT1 association and is required for CCAR2-mediated SIRT1 inhibition. Under oxidative stress, promotes ATG7 ubiquitination by phosphorylating the E3 ubiquitin ligase TRIM32 at 'Ser-56' leading to positive regulation of the autophagosme assembly. The polypeptide is Serine/threonine-protein kinase Chk2 (Mus musculus (Mouse)).